Reading from the N-terminus, the 118-residue chain is MSSEKVRASHILIKHQGSRRKSSWKDPDGSLISATTRDDAVSQLQSLRQELLSDPASFSDLASRHSHCSSAKRGGDLGPFGRGQMQKPFEEATFALKVGEISDIVDTDSGVHIIKRTG.

2 disordered regions span residues 1–37 (MSSE…ATTR) and 61–84 (LASR…GRGQ). The region spanning 3 to 118 (SEKVRASHIL…SGVHIIKRTG (116 aa)) is the PpiC domain. Residues 12 to 22 (LIKHQGSRRKS) are compositionally biased toward basic residues.

It belongs to the PpiC/parvulin rotamase family. In terms of processing, the N-terminus is blocked. Expressed in roots, stems, leaves, flowers and seedlings.

It localises to the cytoplasm. The protein localises to the nucleus. It catalyses the reaction [protein]-peptidylproline (omega=180) = [protein]-peptidylproline (omega=0). With respect to regulation, inhibited in vitro by juglone. Functionally, prolyl cis/trans isomerase with specificity for phospho-Ser-Pro bonds. In Digitalis lanata (Grecian foxglove), this protein is Peptidyl-prolyl cis-trans isomerase Pin1 (PARV12.8).